The sequence spans 579 residues: Golvesin (579 aa).

Residues 1-75 (MTSVNEHSLL…NNNNNNNNNN (75 aa)) form a required for targeting to the plasma membrane region. Residues 1–79 (MTSVNEHSLL…NNNNNNSNTG (79 aa)) form a disordered region. At 1 to 94 (MTSVNEHSLL…KKKKWNFRKK (94 aa)) the chain is on the lumenal side. The segment covering 11 to 77 (INNNENNDNN…NNNNNNNNSN (67 aa)) has biased composition (low complexity). The chain crosses the membrane as a helical; Signal-anchor for type III membrane protein span at residues 95 to 115 (ILPMIVILIITAIVVCLVVFS). The tract at residues 95-118 (ILPMIVILIITAIVVCLVVFSLPF) is required for membrane targeting. Residues 116 to 578 (LPFDSSNTIY…SNDFVIAESP (463 aa)) are Cytoplasmic-facing. Positions 559–579 (WPSSKGIPGFSNDFVIAESPE) are required for transfer to endosomes and contractile vacuoles; the protein is trapped in the Golgi.

The protein localises to the contractile vacuole membrane. The protein resides in the endosome membrane. It is found in the golgi apparatus membrane. The protein is Golvesin (gol) of Dictyostelium discoideum (Social amoeba).